The primary structure comprises 237 residues: Octanoyltransferase (237 aa).

One can recognise a BPL/LPL catalytic domain in the interval 27–210 (SGGDDILLLL…EFYHIFQPAG (184 aa)). Substrate contacts are provided by residues 72–79 (RGGNVTCH), 139–141 (SLG), and 152–154 (GMA). C170 serves as the catalytic Acyl-thioester intermediate.

This sequence belongs to the LipB family.

The protein localises to the cytoplasm. It catalyses the reaction octanoyl-[ACP] + L-lysyl-[protein] = N(6)-octanoyl-L-lysyl-[protein] + holo-[ACP] + H(+). It functions in the pathway protein modification; protein lipoylation via endogenous pathway; protein N(6)-(lipoyl)lysine from octanoyl-[acyl-carrier-protein]: step 1/2. Catalyzes the transfer of endogenously produced octanoic acid from octanoyl-acyl-carrier-protein onto the lipoyl domains of lipoate-dependent enzymes. Lipoyl-ACP can also act as a substrate although octanoyl-ACP is likely to be the physiological substrate. This chain is Octanoyltransferase, found in Desulfovibrio desulfuricans (strain ATCC 27774 / DSM 6949 / MB).